A 187-amino-acid chain; its full sequence is Elongation factor P (187 aa).

The protein belongs to the elongation factor P family.

It is found in the cytoplasm. Its pathway is protein biosynthesis; polypeptide chain elongation. In terms of biological role, involved in peptide bond synthesis. Stimulates efficient translation and peptide-bond synthesis on native or reconstituted 70S ribosomes in vitro. Probably functions indirectly by altering the affinity of the ribosome for aminoacyl-tRNA, thus increasing their reactivity as acceptors for peptidyl transferase. The protein is Elongation factor P of Granulibacter bethesdensis (strain ATCC BAA-1260 / CGDNIH1).